The following is a 36-amino-acid chain: AKKSVGDLTKADLEGKRVFVRADLNVPLDKEQKXTD.

Ala22, Asp23, and Asn25 together coordinate (2R)-3-phosphoglycerate.

This sequence belongs to the phosphoglycerate kinase family. As to quaternary structure, monomer. The cofactor is Mg(2+).

It is found in the plastid. The protein resides in the chloroplast. The enzyme catalyses (2R)-3-phosphoglycerate + ATP = (2R)-3-phospho-glyceroyl phosphate + ADP. The protein operates within carbohydrate biosynthesis; Calvin cycle. The protein is Phosphoglycerate kinase, chloroplastic of Scenedesmus fuscus (Green alga).